Reading from the N-terminus, the 216-residue chain is Adenylate kinase (216 aa).

10–15 (GAGKGT) contributes to the ATP binding site. The NMP stretch occupies residues 30–59 (STGDMFRAAMKAETEMGLQAKSFIDKGALV). AMP contacts are provided by residues Thr31, Arg36, 57–59 (ALV), 85–88 (GFPR), and Gln92. Residues 126-163 (GRRICKECGATYHLEFNPPAKADVCDKCGGELYQRSDD) form an LID region. Arg127 contacts ATP. Zn(2+) contacts are provided by Cys130 and Cys133. 136-137 (TY) contributes to the ATP binding site. Residues Cys150 and Cys153 each contribute to the Zn(2+) site. Positions 160 and 171 each coordinate AMP. Position 199 (Gln199) interacts with ATP.

The protein belongs to the adenylate kinase family. Monomer.

It localises to the cytoplasm. The catalysed reaction is AMP + ATP = 2 ADP. The protein operates within purine metabolism; AMP biosynthesis via salvage pathway; AMP from ADP: step 1/1. Catalyzes the reversible transfer of the terminal phosphate group between ATP and AMP. Plays an important role in cellular energy homeostasis and in adenine nucleotide metabolism. This is Adenylate kinase from Bacillus cereus (strain ATCC 10987 / NRS 248).